A 313-amino-acid chain; its full sequence is Porphobilinogen deaminase (313 aa).

Cysteine 242 carries the S-(dipyrrolylmethanemethyl)cysteine modification.

The protein belongs to the HMBS family. Monomer. Dipyrromethane is required as a cofactor.

The catalysed reaction is 4 porphobilinogen + H2O = hydroxymethylbilane + 4 NH4(+). Its pathway is porphyrin-containing compound metabolism; protoporphyrin-IX biosynthesis; coproporphyrinogen-III from 5-aminolevulinate: step 2/4. In terms of biological role, tetrapolymerization of the monopyrrole PBG into the hydroxymethylbilane pre-uroporphyrinogen in several discrete steps. In Klebsiella pneumoniae (strain 342), this protein is Porphobilinogen deaminase.